Here is a 105-residue protein sequence, read N- to C-terminus: U2-lycotoxin-Ls1a (105 aa).

An N-terminal signal peptide occupies residues 1 to 17 (MIKYVLISALLVVAVYS). Positions 18 to 41 (FTIEDNEDALLEEAEDELDTEEER) are excised as a propeptide. 4 disulfide bridges follow: cysteine 51–cysteine 67, cysteine 58–cysteine 97, cysteine 60–cysteine 83, and cysteine 69–cysteine 81.

The protein belongs to the neurotoxin 04 (omega-agtx) family. 01 (type I omega-agtx) subfamily. As to expression, expressed by the venom gland.

Its subcellular location is the secreted. Its function is as follows. Insecticidal to house crickets. It induces an excitatory slow-onset impact that leads to irreversible spastic paralysis. It also modifies human voltage-gated potassium channel Kv1.5/KCNA5. Most likely, it binds to the voltage-sensing domain of the channel, suggesting it does not block the pore but prevents its opening at physiological membrane potentials. The recombinant peptide binds to the channel in an irreversible manner and slows down the hKv1.5 current activation kinetics. It is not toxic to mice, when intracranially injected (at 0.5 ug/g mouse). The chain is U2-lycotoxin-Ls1a from Lycosa singoriensis (Wolf spider).